We begin with the raw amino-acid sequence, 340 residues long: MRPILLQGHERSLNQIRFNHDGDLLFSVAKDKILCAWYSANGERLGTYHGHQGALWTVDVSPGTVLLATGAADNTVRLWNAKSGECVKVWDFPTAVKRVEFSPDGSRLLAVTEKRMGYLGTIVVFDVRYGDGEGNNLDDQTDEPSLKITCEQSKATVAGWSFLGKYIIAGHEDGSVSQYDSKTGEQLQNVQAHEFDYQINDLQFSADRTYFITASKDKSAKIISCRDLQVMKTFVADTPLNTAAITPKKDFVILGGGQAAMDVTTTSARQGKFEARFYHKIFEDEIGRVRGHFGPLNTIAVHPAGTGYASGGEDGYVRVHHFDKPYFDFMYEVEREKARR.

WD repeat units follow at residues 8–47, 50–89, 91–135, 150–189, 194–233, and 291–330; these read GHER…RLGT, GHQG…CVKV, DFPT…GEGN, CEQS…QLQN, EFDY…VMKT, and GHFG…FDFM.

The protein belongs to the eIF-3 subunit I family. As to quaternary structure, component of the eukaryotic translation initiation factor 3 (eIF-3) complex.

The protein localises to the cytoplasm. In terms of biological role, component of the eukaryotic translation initiation factor 3 (eIF-3) complex, which is involved in protein synthesis of a specialized repertoire of mRNAs and, together with other initiation factors, stimulates binding of mRNA and methionyl-tRNAi to the 40S ribosome. The eIF-3 complex specifically targets and initiates translation of a subset of mRNAs involved in cell proliferation. This Coccidioides immitis (strain RS) (Valley fever fungus) protein is Eukaryotic translation initiation factor 3 subunit I.